Here is a 304-residue protein sequence, read N- to C-terminus: PHO85 cyclin-9 (304 aa).

In terms of domain architecture, Cyclin N-terminal spans 19 to 146; the sequence is EMIQFLATST…LLEYLNWDVR (128 aa).

It belongs to the cyclin family. PCL1,2 subfamily. As to quaternary structure, forms a cyclin-CDK complex with PHO85.

M/G1-specific cyclin partner of the cyclin-dependent kinase (CDK) PHO85. May have a role in bud site selection in G1 phase. The polypeptide is PHO85 cyclin-9 (PCL9) (Saccharomyces cerevisiae (strain ATCC 204508 / S288c) (Baker's yeast)).